The following is a 420-amino-acid chain: Exodeoxyribonuclease 7 large subunit (420 aa).

This sequence belongs to the XseA family. Heterooligomer composed of large and small subunits.

It is found in the cytoplasm. It carries out the reaction Exonucleolytic cleavage in either 5'- to 3'- or 3'- to 5'-direction to yield nucleoside 5'-phosphates.. Its function is as follows. Bidirectionally degrades single-stranded DNA into large acid-insoluble oligonucleotides, which are then degraded further into small acid-soluble oligonucleotides. This is Exodeoxyribonuclease 7 large subunit from Helicobacter pylori (strain HPAG1).